The chain runs to 120 residues: Large ribosomal subunit protein uL22 (120 aa).

This sequence belongs to the universal ribosomal protein uL22 family. Part of the 50S ribosomal subunit.

In terms of biological role, this protein binds specifically to 23S rRNA; its binding is stimulated by other ribosomal proteins, e.g. L4, L17, and L20. It is important during the early stages of 50S assembly. It makes multiple contacts with different domains of the 23S rRNA in the assembled 50S subunit and ribosome. Its function is as follows. The globular domain of the protein is located near the polypeptide exit tunnel on the outside of the subunit, while an extended beta-hairpin is found that lines the wall of the exit tunnel in the center of the 70S ribosome. The protein is Large ribosomal subunit protein uL22 of Rippkaea orientalis (strain PCC 8801 / RF-1) (Cyanothece sp. (strain PCC 8801)).